The primary structure comprises 525 residues: 2-isopropylmalate synthase (525 aa).

Residues 5–267 (VIIFDTTLRD…HTGIHHQEIY (263 aa)) enclose the Pyruvate carboxyltransferase domain. Residues aspartate 14, histidine 202, histidine 204, and asparagine 238 each contribute to the Mn(2+) site. Residues 392–525 (RLEYFSVQSS…NNSQDMQETV (134 aa)) form a regulatory domain region.

Belongs to the alpha-IPM synthase/homocitrate synthase family. LeuA type 1 subfamily. Homodimer. Requires Mn(2+) as cofactor.

The protein localises to the cytoplasm. The enzyme catalyses 3-methyl-2-oxobutanoate + acetyl-CoA + H2O = (2S)-2-isopropylmalate + CoA + H(+). It participates in amino-acid biosynthesis; L-leucine biosynthesis; L-leucine from 3-methyl-2-oxobutanoate: step 1/4. Its function is as follows. Catalyzes the condensation of the acetyl group of acetyl-CoA with 3-methyl-2-oxobutanoate (2-ketoisovalerate) to form 3-carboxy-3-hydroxy-4-methylpentanoate (2-isopropylmalate). In Sodalis glossinidius (strain morsitans), this protein is 2-isopropylmalate synthase.